A 374-amino-acid polypeptide reads, in one-letter code: Alanine racemase (374 aa).

The active-site Proton acceptor; specific for D-alanine is lysine 34. Residue lysine 34 is modified to N6-(pyridoxal phosphate)lysine. Arginine 147 provides a ligand contact to substrate. Residue tyrosine 271 is the Proton acceptor; specific for L-alanine of the active site. A substrate-binding site is contributed by methionine 319.

This sequence belongs to the alanine racemase family. The cofactor is pyridoxal 5'-phosphate.

It carries out the reaction L-alanine = D-alanine. It participates in amino-acid biosynthesis; D-alanine biosynthesis; D-alanine from L-alanine: step 1/1. Its function is as follows. Catalyzes the interconversion of L-alanine and D-alanine. May also act on other amino acids. The protein is Alanine racemase (alr) of Haemophilus ducreyi (strain 35000HP / ATCC 700724).